Consider the following 245-residue polypeptide: tRNA pseudouridine synthase A (245 aa).

Aspartate 52 serves as the catalytic Nucleophile. Tyrosine 111 provides a ligand contact to substrate.

The protein belongs to the tRNA pseudouridine synthase TruA family. As to quaternary structure, homodimer.

It carries out the reaction uridine(38/39/40) in tRNA = pseudouridine(38/39/40) in tRNA. Formation of pseudouridine at positions 38, 39 and 40 in the anticodon stem and loop of transfer RNAs. This is tRNA pseudouridine synthase A from Wolbachia pipientis wMel.